Consider the following 909-residue polypeptide: Probable dipeptidyl-aminopeptidase B (909 aa).

A disordered region spans residues 1–63 (MRVGSRINDE…HNHNGRAQGN (63 aa)). Topologically, residues 1–94 (MRVGSRINDE…NGKSNQRRTL (94 aa)) are cytoplasmic. Low complexity predominate over residues 27 to 38 (DSSSTASISLTL). The helical; Signal-anchor for type II membrane protein transmembrane segment at 95–115 (IVFWLLVALCVGGWAVAFLFF) threads the bilayer. The Vacuolar portion of the chain corresponds to 116–909 (VTSPGNKTST…YSNFLPIRSF (794 aa)). Residue N121 is glycosylated (N-linked (GlcNAc...) asparagine). The span at 123–134 (TSTSPHSGSNSP) shows a compositional bias: polar residues. A disordered region spans residues 123–144 (TSTSPHSGSNSPEGDVTKPGIP). N-linked (GlcNAc...) asparagine glycans are attached at residues N207, N303, and N355. S760 acts as the Charge relay system in catalysis. N-linked (GlcNAc...) asparagine glycosylation is found at N814, N819, and N822. Residues D837 and H870 each act as charge relay system in the active site. An N-linked (GlcNAc...) asparagine glycan is attached at N888.

It belongs to the peptidase S9B family.

The protein localises to the vacuole membrane. It carries out the reaction Release of an N-terminal dipeptide, Xaa-Yaa-|-Zaa-, from a polypeptide, preferentially when Yaa is Pro, provided Zaa is neither Pro nor hydroxyproline.. In terms of biological role, type IV dipeptidyl-peptidase which removes N-terminal dipeptides sequentially from polypeptides having unsubstituted N-termini provided that the penultimate residue is proline. The sequence is that of Probable dipeptidyl-aminopeptidase B (DAPB) from Arthroderma benhamiae (strain ATCC MYA-4681 / CBS 112371) (Trichophyton mentagrophytes).